We begin with the raw amino-acid sequence, 282 residues long: 2-dehydro-3-deoxyphosphooctonate aldolase (282 aa).

The protein belongs to the KdsA family.

It is found in the cytoplasm. It carries out the reaction D-arabinose 5-phosphate + phosphoenolpyruvate + H2O = 3-deoxy-alpha-D-manno-2-octulosonate-8-phosphate + phosphate. It functions in the pathway carbohydrate biosynthesis; 3-deoxy-D-manno-octulosonate biosynthesis; 3-deoxy-D-manno-octulosonate from D-ribulose 5-phosphate: step 2/3. It participates in bacterial outer membrane biogenesis; lipopolysaccharide biosynthesis. This is 2-dehydro-3-deoxyphosphooctonate aldolase from Granulibacter bethesdensis (strain ATCC BAA-1260 / CGDNIH1).